Consider the following 292-residue polypeptide: Diaminopimelate epimerase (292 aa).

Positions 13, 46, and 66 each coordinate substrate. Residue cysteine 75 is the Proton donor of the active site. Substrate-binding positions include 76–77 (GN), asparagine 166, asparagine 199, and 217–218 (ER). The Proton acceptor role is filled by cysteine 226. 227–228 (GT) contributes to the substrate binding site.

It belongs to the diaminopimelate epimerase family. As to quaternary structure, homodimer.

The protein localises to the cytoplasm. The enzyme catalyses (2S,6S)-2,6-diaminopimelate = meso-2,6-diaminopimelate. It participates in amino-acid biosynthesis; L-lysine biosynthesis via DAP pathway; DL-2,6-diaminopimelate from LL-2,6-diaminopimelate: step 1/1. Its function is as follows. Catalyzes the stereoinversion of LL-2,6-diaminopimelate (L,L-DAP) to meso-diaminopimelate (meso-DAP), a precursor of L-lysine and an essential component of the bacterial peptidoglycan. This Ralstonia pickettii (strain 12J) protein is Diaminopimelate epimerase.